Reading from the N-terminus, the 105-residue chain is QPAVTPSVILFPPSSEELKDNKATLVCLISDFYPRTVKVNWKADGNSVTQGVDTTQPSKQSNNKYAASSFLHLTANQWKSYQSVTCQVTHEGHTVEKSLAPAECS.

An Ig-like domain is found at 6–100; sequence PSVILFPPSS…EGHTVEKSLA (95 aa). An intrachain disulfide couples C27 to C86.

This Oryctolagus cuniculus (Rabbit) protein is Ig lambda chain C region.